A 238-amino-acid polypeptide reads, in one-letter code: Uridylate kinase (238 aa).

12 to 15 (KLSG) is an ATP binding site. Glycine 54 contacts UMP. Positions 55 and 59 each coordinate ATP. UMP is bound by residues aspartate 74 and 135 to 142 (TGNPFFTT). The ATP site is built by threonine 162, tyrosine 168, and aspartate 171.

It belongs to the UMP kinase family. In terms of assembly, homohexamer.

It is found in the cytoplasm. It catalyses the reaction UMP + ATP = UDP + ADP. It participates in pyrimidine metabolism; CTP biosynthesis via de novo pathway; UDP from UMP (UMPK route): step 1/1. Its activity is regulated as follows. Inhibited by UTP. Functionally, catalyzes the reversible phosphorylation of UMP to UDP. This is Uridylate kinase from Methylobacillus flagellatus (strain ATCC 51484 / DSM 6875 / VKM B-1610 / KT).